Consider the following 105-residue polypeptide: uncharacterized protein (105 aa).

The helical transmembrane segment at 13 to 35 (LLFAFVVVIVVLTLSYVYAQNII) threads the bilayer.

Its subcellular location is the membrane. This is an uncharacterized protein from Archaeoglobus fulgidus (strain ATCC 49558 / DSM 4304 / JCM 9628 / NBRC 100126 / VC-16).